We begin with the raw amino-acid sequence, 275 residues long: Formamidopyrimidine-DNA glycosylase (275 aa).

P2 serves as the catalytic Schiff-base intermediate with DNA. The active-site Proton donor is E3. Residue K58 is the Proton donor; for beta-elimination activity of the active site. Residues H93, R111, and R156 each contribute to the DNA site. The FPG-type zinc finger occupies 241–275 (FVYDRAGQPCRVCGTPVRQIVQGQRSTYFCPTCQR). Residue R265 is the Proton donor; for delta-elimination activity of the active site.

It belongs to the FPG family. As to quaternary structure, monomer. Zn(2+) is required as a cofactor.

It carries out the reaction Hydrolysis of DNA containing ring-opened 7-methylguanine residues, releasing 2,6-diamino-4-hydroxy-5-(N-methyl)formamidopyrimidine.. It catalyses the reaction 2'-deoxyribonucleotide-(2'-deoxyribose 5'-phosphate)-2'-deoxyribonucleotide-DNA = a 3'-end 2'-deoxyribonucleotide-(2,3-dehydro-2,3-deoxyribose 5'-phosphate)-DNA + a 5'-end 5'-phospho-2'-deoxyribonucleoside-DNA + H(+). In terms of biological role, involved in base excision repair of DNA damaged by oxidation or by mutagenic agents. Acts as a DNA glycosylase that recognizes and removes damaged bases. Has a preference for oxidized purines, such as 7,8-dihydro-8-oxoguanine (8-oxoG). Has AP (apurinic/apyrimidinic) lyase activity and introduces nicks in the DNA strand. Cleaves the DNA backbone by beta-delta elimination to generate a single-strand break at the site of the removed base with both 3'- and 5'-phosphates. The polypeptide is Formamidopyrimidine-DNA glycosylase (Burkholderia cenocepacia (strain HI2424)).